The sequence spans 187 residues: Large ribosomal subunit protein uL5 (187 aa).

The protein belongs to the universal ribosomal protein uL5 family. Part of the 50S ribosomal subunit; part of the 5S rRNA/L5/L18/L25 subcomplex. Contacts the 5S rRNA and the P site tRNA. Forms a bridge to the 30S subunit in the 70S ribosome.

Functionally, this is one of the proteins that bind and probably mediate the attachment of the 5S RNA into the large ribosomal subunit, where it forms part of the central protuberance. In the 70S ribosome it contacts protein S13 of the 30S subunit (bridge B1b), connecting the 2 subunits; this bridge is implicated in subunit movement. Contacts the P site tRNA; the 5S rRNA and some of its associated proteins might help stabilize positioning of ribosome-bound tRNAs. The sequence is that of Large ribosomal subunit protein uL5 from Mycolicibacterium paratuberculosis (strain ATCC BAA-968 / K-10) (Mycobacterium paratuberculosis).